The following is a 145-amino-acid chain: Cystin-1 (145 aa).

The segment at 1–129 (MGSGSSRSGR…PEGQSAISYD (129 aa)) is disordered. The N-myristoyl glycine moiety is linked to residue Gly-2. Residues 29–33 (ASEGG) carry the Ciliary targeting motif motif. At Ser-116 the chain carries Phosphoserine.

Interacts (when myristoylated) with UNC119 and UNC119B; interaction is required for localization to cilium. As to expression, expressed primarily in the kidney and liver. Expressed at lower levels in the lung, brain and heart.

The protein resides in the cell projection. It localises to the cilium membrane. Its subcellular location is the cytoplasm. The protein localises to the cytoskeleton. It is found in the cilium axoneme. The polypeptide is Cystin-1 (Cys1) (Mus musculus (Mouse)).